Reading from the N-terminus, the 89-residue chain is Small ribosomal subunit protein uS15 (89 aa).

Residues 1–25 (MSLDTTEKQQLINTHQTHGTDTGSA) are disordered. Over residues 8 to 25 (KQQLINTHQTHGTDTGSA) the composition is skewed to polar residues.

This sequence belongs to the universal ribosomal protein uS15 family. In terms of assembly, part of the 30S ribosomal subunit. Forms a bridge to the 50S subunit in the 70S ribosome, contacting the 23S rRNA.

One of the primary rRNA binding proteins, it binds directly to 16S rRNA where it helps nucleate assembly of the platform of the 30S subunit by binding and bridging several RNA helices of the 16S rRNA. Functionally, forms an intersubunit bridge (bridge B4) with the 23S rRNA of the 50S subunit in the ribosome. This Parasynechococcus marenigrum (strain WH8102) protein is Small ribosomal subunit protein uS15.